Consider the following 172-residue polypeptide: 3-hydroxydecanoyl-[acyl-carrier-protein] dehydratase (172 aa).

His71 is a catalytic residue.

It belongs to the thioester dehydratase family. FabA subfamily. Homodimer.

It is found in the cytoplasm. The enzyme catalyses a (3R)-hydroxyacyl-[ACP] = a (2E)-enoyl-[ACP] + H2O. It carries out the reaction (3R)-hydroxydecanoyl-[ACP] = (2E)-decenoyl-[ACP] + H2O. The catalysed reaction is (2E)-decenoyl-[ACP] = (3Z)-decenoyl-[ACP]. The protein operates within lipid metabolism; fatty acid biosynthesis. Necessary for the introduction of cis unsaturation into fatty acids. Catalyzes the dehydration of (3R)-3-hydroxydecanoyl-ACP to E-(2)-decenoyl-ACP and then its isomerization to Z-(3)-decenoyl-ACP. Can catalyze the dehydratase reaction for beta-hydroxyacyl-ACPs with saturated chain lengths up to 16:0, being most active on intermediate chain length. The protein is 3-hydroxydecanoyl-[acyl-carrier-protein] dehydratase of Blochmanniella pennsylvanica (strain BPEN).